Consider the following 285-residue polypeptide: Undecaprenyl-diphosphatase 2 (285 aa).

The next 8 helical transmembrane spans lie at 5–25, 47–67, 86–106, 122–142, 156–176, 198–218, 235–255, and 265–285; these read MDLL…LLPV, MTFL…VYFW, WYVL…QSLI, LFSN…LIIL, LPSA…RGFS, FSFA…LVRL, SLLL…LLAL, and GRWY…LTLA.

It belongs to the UppP family.

Its subcellular location is the cell inner membrane. It carries out the reaction di-trans,octa-cis-undecaprenyl diphosphate + H2O = di-trans,octa-cis-undecaprenyl phosphate + phosphate + H(+). In terms of biological role, catalyzes the dephosphorylation of undecaprenyl diphosphate (UPP). Confers resistance to bacitracin. In Acinetobacter baylyi (strain ATCC 33305 / BD413 / ADP1), this protein is Undecaprenyl-diphosphatase 2.